A 227-amino-acid polypeptide reads, in one-letter code: PKHD-type hydroxylase Bamb_4479 (227 aa).

One can recognise a Fe2OG dioxygenase domain in the interval 80-179 (QVYPPLFNRY…RVASFFWVQS (100 aa)). The Fe cation site is built by His-98, Asp-100, and His-160. Arg-170 lines the 2-oxoglutarate pocket.

The cofactor is Fe(2+). Requires L-ascorbate as cofactor.

This chain is PKHD-type hydroxylase Bamb_4479, found in Burkholderia ambifaria (strain ATCC BAA-244 / DSM 16087 / CCUG 44356 / LMG 19182 / AMMD) (Burkholderia cepacia (strain AMMD)).